A 1534-amino-acid polypeptide reads, in one-letter code: Ribosome-binding protein 1 (1534 aa).

Residues 1–7 (MDIYDTQ) are Lumenal-facing. A helical membrane pass occupies residues 8–28 (TLGVMVFGGFMVVSAIGIFLV). The Cytoplasmic portion of the chain corresponds to 29–1534 (STFSMKETSY…DSSSKEGTSV (1506 aa)). Disordered regions lie at residues 45–91 (QRKE…PAPN) and 125–152 (PAMPQEKLAPSPKDKKKKEKKVAKVEPA). Residues 52–63 (THHQKVEKKKKE) show a composition bias toward basic residues. Basic and acidic residues predominate over residues 64 to 88 (KTVEKKGKTKKKEEKPNGKIPDHEP). Residues 125 to 135 (PAMPQEKLAPS) are compositionally biased toward low complexity. Lys148 participates in a covalent cross-link: Glycyl lysine isopeptide (Lys-Gly) (interchain with G-Cter in SUMO2). Residues Ser159 and Ser165 each carry the phosphoserine modification. Disordered stretches follow at residues 173–780 (APKE…PLYL), 968–987 (KELVEKSEAARQEEQQRKAL), and 1021–1082 (RELC…RAEN). A compositionally biased stretch (low complexity) spans 175 to 194 (KEVPMVVVPPVGAKAGTPAT). 54 repeat units span residues 197–206 (AQGKKAEGAQ), 207–216 (NQSRKAEGAP), 217–226 (NQGKKAEGAL), 227–236 (NQGKKAEGAQ), 237–246 (NQGKKVEVAP), 247–256 (NQGKKAEGGQ), 257–266 (NQGKKVEGAQ), 267–276 (NQGKKAEGTP), 277–286 (NQGKKAEGAP), 287–296 (NQGKKTDGAP), 297–306 (NQGKKSEGAP), 307–316 (NQGKKAEGAQ), 317–326 (NQGKKVEVAP), 327–336 (NQGKKAEGGQ), 337–346 (NQGKKVEGAQ), 347–356 (NQGKKAEGTP), 357–366 (NQGKKAEGAP), 367–376 (NQGKKTDGAP), 377–386 (NQGKKSEGAP), 387–396 (NQGKKVEGAQ), 397–406 (NQGKKVEGVQ), 407–416 (NQGKKAEGAQ), 417–426 (NQGKKAEGTS), 427–436 (SQGRKEEGTP), 437–446 (NLGKKAEGSP), 447–456 (NQGKKVEVVQ), 457–466 (NQSKKVEGAP), 467–476 (NQGKKAEGSQ), 477–486 (NQGKKTEGAS), 487–496 (NQGKKVDGAQ), 497–506 (NQGKKAEGAP), 507–516 (NQGKKVEGAQ), 517–526 (NQGKKAEGTP), 527–536 (NQGKKAEGAQ), 537–546 (NQGKKAEGAP), 547–556 (NQGKKAEGAP), 557–566 (NQGKKAEGAP), 567–576 (NQGKKAEGAP), 577–586 (NQGKKAEAAP), 587–596 (NQGKKAEGAP), 597–606 (NQGKKAEGAP), 607–616 (NQGKKAEAAP), 617–626 (NQGKKAEGAP), 627–636 (NQGKKAEGAP), 637–646 (NQGKKAEGAP), 647–656 (NQGKKAEGAQ), 657–666 (NQGKKAEGAP), 667–676 (NQGKKADLVA), 677–686 (NQGTKAEGVA), 687–696 (GQGKKAEGAP), 697–706 (NQGKKGEGTP), 707–716 (NQGKKSEGSP), 717–726 (NQGKKVDASA), and 727–736 (NQSKRAESAP). The interval 197 to 736 (AQGKKAEGAQ…NQSKRAESAP (540 aa)) is 54 X 10 AA tandem repeats of [NASG]-[QL]-[GS]-[KRT]-[KR]-[AVTSEG]-[ED]-[AGVLS]-[ATGSV]-[PQLSA]. Residue Thr275 is modified to Phosphothreonine. Positions 395–428 (AQNQGKKVEGVQNQGKKAEGAQNQGKKAEGTSSQ) are enriched in polar residues. Positions 474-499 (GSQNQGKKTEGASNQGKKVDGAQNQG) are enriched in polar residues. Over residues 705–718 (TPNQGKKSEGSPNQ) the composition is skewed to polar residues. Phosphoserine is present on Ser715. Ser747 carries the post-translational modification Phosphoserine. A Glycyl lysine isopeptide (Lys-Gly) (interchain with G-Cter in SUMO1) cross-link involves residue Lys752. The residue at position 1032 (Ser1032) is a Phosphoserine. The segment covering 1059–1080 (AEVKSKSEELSGLHGQLKEARA) has biased composition (basic and acidic residues). Lys1064 is subject to N6-acetyllysine. 2 positions are modified to phosphoserine: Ser1091 and Ser1110. 3 disordered regions span residues 1224 to 1251 (ELLKQRPADTDPSSDLASKLREAEETQN), 1391 to 1416 (KSHVEDGDVAGSPAAPPAEQDPVELK), and 1509 to 1534 (ERDTVKKLQEQLDKTDDSSSKEGTSV). Positions 1509 to 1528 (ERDTVKKLQEQLDKTDDSSS) are enriched in basic and acidic residues.

It localises to the endoplasmic reticulum membrane. Functionally, acts as a ribosome receptor and mediates interaction between the ribosome and the endoplasmic reticulum membrane. The chain is Ribosome-binding protein 1 (RRBP1) from Canis lupus familiaris (Dog).